A 378-amino-acid chain; its full sequence is Cysteine endopeptidase RepA (378 aa).

The signal sequence occupies residues 1–24; it reads MLRCFLVAAAAVALAAAAAAPARA. Residues 25–141 constitute a propeptide, activation peptide; sequence IPFTESDLSS…SFRYGGDDED (117 aa). 3 cysteine pairs are disulfide-bonded: Cys-164-Cys-206, Cys-198-Cys-239, and Cys-297-Cys-350. Cys-167 is a catalytic residue. Catalysis depends on residues His-303 and Asn-324.

Belongs to the peptidase C1 family.

The protein resides in the protein storage vacuole. In terms of biological role, cysteine endopeptidase that digests in vitro both the acidic and basic subunits of glutelin, the major seed storage protein of rice. This Oryza sativa subsp. japonica (Rice) protein is Cysteine endopeptidase RepA.